The following is a 63-amino-acid chain: Small ribosomal subunit protein eS17 (63 aa).

This sequence belongs to the eukaryotic ribosomal protein eS17 family.

This chain is Small ribosomal subunit protein eS17, found in Methanococcus vannielii (strain ATCC 35089 / DSM 1224 / JCM 13029 / OCM 148 / SB).